The chain runs to 490 residues: Glycogen synthase kinase-3 alpha (490 aa).

Residues 1-15 (MSGGGPSGGGPGGSG) are compositionally biased toward gly residues. The disordered stretch occupies residues 1–97 (MSGGGPSGGG…PPGVKLGRDS (97 aa)). Residue Ser2 is modified to N-acetylserine. Ser2 is subject to Phosphoserine. Ser21 bears the Phosphoserine; by PKB/AKT1 mark. Residues 25–82 (PGGGGGGGGGGPGGSASGPGGTGGGKASVGAMGGGVGASSSGGGPSGSGGGGSGGPGA) are compositionally biased toward gly residues. A phosphoserine mark is found at Ser72, Ser77, and Ser97. Residues 119 to 404 (YTDIKVIGNG…PLEACAHSFF (286 aa)) form the Protein kinase domain. Residues 125–133 (IGNGSFGVV) and Lys148 contribute to the ATP site. The active-site Proton acceptor is Asp244. Tyr279 is subject to Phosphotyrosine. A disordered region spans residues 451–490 (GPASPLTTSYNPSSQALTEAQTGQDWQPSDATTATLASSS). Over residues 455 to 480 (PLTTSYNPSSQALTEAQTGQDWQPSD) the composition is skewed to polar residues. Residues 481 to 490 (ATTATLASSS) show a composition bias toward low complexity.

The protein belongs to the protein kinase superfamily. CMGC Ser/Thr protein kinase family. GSK-3 subfamily. As to quaternary structure, monomer. Interacts with AXIN1 and CTNNB1/beta-catenin. Interacts with ARRB2. Interacts with CTNND2. Interacts with LMBR1L. Interacts with DDX3X. Interacts with TNFRSF10B. Post-translationally, phosphorylated by AKT1 at Ser-21: upon insulin-mediated signaling, the activated PKB/AKT1 protein kinase phosphorylates and deactivates GSK3A, resulting in the dephosphorylation and activation of GYS1. Activated by phosphorylation at Tyr-279.

It carries out the reaction L-seryl-[tau protein] + ATP = O-phospho-L-seryl-[tau protein] + ADP + H(+). It catalyses the reaction L-threonyl-[tau protein] + ATP = O-phospho-L-threonyl-[tau protein] + ADP + H(+). The enzyme catalyses L-seryl-[protein] + ATP = O-phospho-L-seryl-[protein] + ADP + H(+). The catalysed reaction is L-threonyl-[protein] + ATP = O-phospho-L-threonyl-[protein] + ADP + H(+). Activated by phosphorylation at Tyr-279. In response to insulin, inhibited by phosphorylation at Ser-21 by PKB/AKT1; phosphorylation at this site causes a conformational change, preventing access of substrates to the active site. Inhibited by lithium. Constitutively active protein kinase that acts as a negative regulator in the hormonal control of glucose homeostasis, Wnt signaling and regulation of transcription factors and microtubules, by phosphorylating and inactivating glycogen synthase (GYS1 or GYS2), CTNNB1/beta-catenin, APC and AXIN1. Requires primed phosphorylation of the majority of its substrates. Contributes to insulin regulation of glycogen synthesis by phosphorylating and inhibiting GYS1 activity and hence glycogen synthesis. Regulates glycogen metabolism in liver, but not in muscle. May also mediate the development of insulin resistance by regulating activation of transcription factors. In Wnt signaling, regulates the level and transcriptional activity of nuclear CTNNB1/beta-catenin. Facilitates amyloid precursor protein (APP) processing and the generation of APP-derived amyloid plaques found in Alzheimer disease. May be involved in the regulation of replication in pancreatic beta-cells. Is necessary for the establishment of neuronal polarity and axon outgrowth. Through phosphorylation of the anti-apoptotic protein MCL1, may control cell apoptosis in response to growth factors deprivation. Acts as a regulator of autophagy by mediating phosphorylation of KAT5/TIP60 under starvation conditions, activating KAT5/TIP60 acetyltransferase activity and promoting acetylation of key autophagy regulators, such as ULK1 and RUBCNL/Pacer. Negatively regulates extrinsic apoptotic signaling pathway via death domain receptors. Promotes the formation of an anti-apoptotic complex, made of DDX3X, BRIC2 and GSK3B, at death receptors, including TNFRSF10B. The anti-apoptotic function is most effective with weak apoptotic signals and can be overcome by stronger stimulation. The protein is Glycogen synthase kinase-3 alpha (Gsk3a) of Mus musculus (Mouse).